Here is a 478-residue protein sequence, read N- to C-terminus: Bifunctional protein HldE (478 aa).

A ribokinase region spans residues 1–318; the sequence is MKITLPDFTR…ENAIHARPES (318 aa). 195–198 serves as a coordination point for ATP; sequence NLSE. Asp-264 is an active-site residue. The cytidylyltransferase stretch occupies residues 344–478; the sequence is MTNGVFDILH…KTIISGSGKN (135 aa).

In the N-terminal section; belongs to the carbohydrate kinase PfkB family. This sequence in the C-terminal section; belongs to the cytidylyltransferase family. Homodimer.

It carries out the reaction D-glycero-beta-D-manno-heptose 7-phosphate + ATP = D-glycero-beta-D-manno-heptose 1,7-bisphosphate + ADP + H(+). The enzyme catalyses D-glycero-beta-D-manno-heptose 1-phosphate + ATP + H(+) = ADP-D-glycero-beta-D-manno-heptose + diphosphate. It participates in nucleotide-sugar biosynthesis; ADP-L-glycero-beta-D-manno-heptose biosynthesis; ADP-L-glycero-beta-D-manno-heptose from D-glycero-beta-D-manno-heptose 7-phosphate: step 1/4. The protein operates within nucleotide-sugar biosynthesis; ADP-L-glycero-beta-D-manno-heptose biosynthesis; ADP-L-glycero-beta-D-manno-heptose from D-glycero-beta-D-manno-heptose 7-phosphate: step 3/4. Its function is as follows. Catalyzes the phosphorylation of D-glycero-D-manno-heptose 7-phosphate at the C-1 position to selectively form D-glycero-beta-D-manno-heptose-1,7-bisphosphate. Catalyzes the ADP transfer from ATP to D-glycero-beta-D-manno-heptose 1-phosphate, yielding ADP-D-glycero-beta-D-manno-heptose. This Erwinia tasmaniensis (strain DSM 17950 / CFBP 7177 / CIP 109463 / NCPPB 4357 / Et1/99) protein is Bifunctional protein HldE.